The primary structure comprises 190 residues: uncharacterized protein (190 aa).

The helical transmembrane segment at 1–21 (MLVMSITFSFVAVALLVYFYV) threads the bilayer. Basic and acidic residues predominate over residues 103–114 (REEVCARPEHRS). Residues 103–130 (REEVCARPEHRSAPSRAGSSAAKPTPTK) are disordered.

It to B.burgdorferi BB0265.

The protein resides in the membrane. This is an uncharacterized protein from Treponema pallidum (strain Nichols).